A 351-amino-acid polypeptide reads, in one-letter code: Ion-translocating oxidoreductase complex subunit D (351 aa).

Helical transmembrane passes span 37–57, 88–108, and 123–143; these read YFFG…AILA, AIPP…AIVI, and PAMA…TTWL. Residue T187 is modified to FMN phosphoryl threonine. Transmembrane regions (helical) follow at residues 214-234, 241-261, 270-290, and 300-317; these read FAGL…LFLL, WHIP…FAVF, IFNL…TDPV, and LYYG…RSWG.

Belongs to the NqrB/RnfD family. In terms of assembly, the complex is composed of six subunits: RnfA, RnfB, RnfC, RnfD, RnfE and RnfG. FMN serves as cofactor.

It localises to the cell inner membrane. Its function is as follows. Part of a membrane-bound complex that couples electron transfer with translocation of ions across the membrane. This chain is Ion-translocating oxidoreductase complex subunit D, found in Aliivibrio salmonicida (strain LFI1238) (Vibrio salmonicida (strain LFI1238)).